A 278-amino-acid chain; its full sequence is Undecaprenyl-diphosphatase (278 aa).

8 helical membrane passes run 14–34, 40–60, 89–109, 121–141, 153–173, 196–216, 227–247, and 257–277; these read GTTE…PWLF, GLAF…AYFW, WAVI…NDVI, TAIV…WLAE, LGLR…LPGV, FSFI…TLKL, VLFV…IAFL, and SIFI…VSFA.

It belongs to the UppP family.

Its subcellular location is the cell membrane. The catalysed reaction is di-trans,octa-cis-undecaprenyl diphosphate + H2O = di-trans,octa-cis-undecaprenyl phosphate + phosphate + H(+). Catalyzes the dephosphorylation of undecaprenyl diphosphate (UPP). Confers resistance to bacitracin. The protein is Undecaprenyl-diphosphatase of Thermomicrobium roseum (strain ATCC 27502 / DSM 5159 / P-2).